A 235-amino-acid polypeptide reads, in one-letter code: RNA polymerase sigma-E factor (235 aa).

Residues 82–95 (DLISVGTIGLIKAV) carry the Polymerase core binding motif. A DNA-binding region (H-T-H motif) is located at residues 202 to 221 (QKEVADMLGISQSYISRLEK).

Belongs to the sigma-70 factor family.

Its function is as follows. Sigma factors are initiation factors that promote the attachment of RNA polymerase to specific initiation sites and are then released. This sigma factor is responsible for the expression of sporulation specific genes. The polypeptide is RNA polymerase sigma-E factor (sigE) (Clostridium acetobutylicum (strain ATCC 824 / DSM 792 / JCM 1419 / IAM 19013 / LMG 5710 / NBRC 13948 / NRRL B-527 / VKM B-1787 / 2291 / W)).